The sequence spans 353 residues: Inactive ADP-ribosyltransferase ARH2 (353 aa).

Residue Ser27 is modified to Phosphoserine.

This sequence belongs to the ADP-ribosylglycohydrolase family.

Its subcellular location is the cytoplasm. It is found in the myofibril. It localises to the sarcomere. Its function is as follows. Required for myofibril assembly and outgrowth of the cardiac chambers in the developing heart. Appears to be catalytically inactive, showing no activity against O-acetyl-ADP-ribose. This is Inactive ADP-ribosyltransferase ARH2 (Adprhl1) from Rattus norvegicus (Rat).